The primary structure comprises 210 residues: DNA dC-&gt;dU-editing enzyme APOBEC-3H (210 aa).

The CMP/dCMP-type deaminase domain occupies Leu-4–Leu-126. Residue His-54 coordinates Zn(2+). The active-site Proton donor is the Glu-56. Residues Cys-85 and Cys-88 each coordinate Zn(2+). The interval Ser-182–Arg-210 is necessary and sufficient for localization to the cytoplasm.

It belongs to the cytidine and deoxycytidylate deaminase family. As to quaternary structure, homodimer. Requires Zn(2+) as cofactor.

The protein resides in the cytoplasm. It carries out the reaction a 2'-deoxycytidine in single-stranded DNA + H2O + H(+) = a 2'-deoxyuridine in single-stranded DNA + NH4(+). Its activity is regulated as follows. Antiviral activity is neutralized by the simian immunodeficiency virus rhesus (SIV-mac) virion infectivity factor (VIF). Functionally, DNA deaminase (cytidine deaminase) which acts as an inhibitor of retrovirus replication and retrotransposon mobility via deaminase-dependent and -independent mechanisms. Exhibits antiviral activity against vif-deficient HIV-1. After the penetration of retroviral nucleocapsids into target cells of infection and the initiation of reverse transcription, it can induce the conversion of cytosine to uracil in the minus-sense single-strand viral DNA, leading to G-to-A hypermutations in the subsequent plus-strand viral DNA. The resultant detrimental levels of mutations in the proviral genome, along with a deamination-independent mechanism that works prior to the proviral integration, together exert efficient antiretroviral effects in infected target cells. Selectively targets single-stranded DNA and does not deaminate double-stranded DNA or single- or double-stranded RNA. This chain is DNA dC-&gt;dU-editing enzyme APOBEC-3H, found in Macaca mulatta (Rhesus macaque).